We begin with the raw amino-acid sequence, 216 residues long: Probable transaldolase (216 aa).

Lys83 (schiff-base intermediate with substrate) is an active-site residue.

This sequence belongs to the transaldolase family. Type 3B subfamily.

It localises to the cytoplasm. The catalysed reaction is D-sedoheptulose 7-phosphate + D-glyceraldehyde 3-phosphate = D-erythrose 4-phosphate + beta-D-fructose 6-phosphate. It participates in carbohydrate degradation; pentose phosphate pathway; D-glyceraldehyde 3-phosphate and beta-D-fructose 6-phosphate from D-ribose 5-phosphate and D-xylulose 5-phosphate (non-oxidative stage): step 2/3. Transaldolase is important for the balance of metabolites in the pentose-phosphate pathway. This is Probable transaldolase from Methanococcus aeolicus (strain ATCC BAA-1280 / DSM 17508 / OCM 812 / Nankai-3).